Here is a 647-residue protein sequence, read N- to C-terminus: DNA mismatch repair protein MutL (647 aa).

Disordered regions lie at residues 356-391 and 407-428; these read EGSQ…SSIS and PRPQ…EALP. The span at 413-423 shows a compositional bias: polar residues; sequence LRPQYQGSVTS.

The protein belongs to the DNA mismatch repair MutL/HexB family.

Functionally, this protein is involved in the repair of mismatches in DNA. It is required for dam-dependent methyl-directed DNA mismatch repair. May act as a 'molecular matchmaker', a protein that promotes the formation of a stable complex between two or more DNA-binding proteins in an ATP-dependent manner without itself being part of a final effector complex. In Citrifermentans bemidjiense (strain ATCC BAA-1014 / DSM 16622 / JCM 12645 / Bem) (Geobacter bemidjiensis), this protein is DNA mismatch repair protein MutL.